We begin with the raw amino-acid sequence, 773 residues long: Glucan endo-1,3-beta-D-glucosidase (773 aa).

The beta-sandwich subdomain stretch occupies residues 1 to 194 (MPPGAKVPQA…KNYFSIAVLP (194 aa)). The region spanning 1–647 (MPPGAKVPQA…HWICNLDSLG (647 aa)) is the GH81 domain. Mg(2+)-binding residues include Ile31, Asn34, Gln35, Tyr36, and Ala89. The tract at residues 195–288 (DNTVSTLTYY…QGTSFKTVYR (94 aa)) is alpha/beta subdomain. The segment at 298–647 (DKGTYDREAL…HWICNLDSLG (350 aa)) is (alpha/beta)6 barrel subdomain. (1,3-beta-D-glucosyl)n contacts are provided by Tyr327 and Lys331. Positions 365, 368, 373, and 376 each coordinate Ca(2+). Asp402 and His406 together coordinate (1,3-beta-D-glucosyl)n. The active site involves Asp402. Ca(2+)-binding residues include Leu454, Arg455, and Phe457. Residues Asn477, Glu479, and Glu483 each contribute to the (1,3-beta-D-glucosyl)n site. Residues Glu479 and Glu483 contribute to the active site. The Mg(2+) site is built by Lys527, Lys618, Asn619, and Trp621. Ca(2+)-binding residues include Asp712, Asn714, Asp716, Gly717, Lys718, Asp723, Asp748, Ile749, Asn750, Asp752, Lys754, and Asp759.

The protein belongs to the glycosyl hydrolase 81 family. Ca(2+) serves as cofactor. The cofactor is Mg(2+).

The protein localises to the secreted. The enzyme catalyses Hydrolysis of (1-&gt;3)-beta-D-glucosidic linkages in (1-&gt;3)-beta-D-glucans.. With respect to regulation, inhibited by manganese, zinc, and copper ions. Its function is as follows. Cleaves internal linkages in 1,3-beta-glucan. May contribute to plant biomass degradation. This chain is Glucan endo-1,3-beta-D-glucosidase, found in Acetivibrio thermocellus (strain ATCC 27405 / DSM 1237 / JCM 9322 / NBRC 103400 / NCIMB 10682 / NRRL B-4536 / VPI 7372) (Clostridium thermocellum).